Here is a 239-residue protein sequence, read N- to C-terminus: 7-cyano-7-deazaguanine synthase (239 aa).

ATP is bound at residue 16 to 26 (FSGGQDSTTCL). Residues C204, C219, C222, and C225 each contribute to the Zn(2+) site.

The protein belongs to the QueC family. Zn(2+) serves as cofactor.

It catalyses the reaction 7-carboxy-7-deazaguanine + NH4(+) + ATP = 7-cyano-7-deazaguanine + ADP + phosphate + H2O + H(+). Its pathway is purine metabolism; 7-cyano-7-deazaguanine biosynthesis. Catalyzes the ATP-dependent conversion of 7-carboxy-7-deazaguanine (CDG) to 7-cyano-7-deazaguanine (preQ(0)). In Polaromonas naphthalenivorans (strain CJ2), this protein is 7-cyano-7-deazaguanine synthase.